Here is a 325-residue protein sequence, read N- to C-terminus: Polyamine aminopropyltransferase (325 aa).

The 238-residue stretch at 11-248 (SSMAEDFAVE…TLWAMAMASD (238 aa)) folds into the PABS domain. Q44 provides a ligand contact to S-methyl-5'-thioadenosine. Spermidine-binding residues include H75 and D99. S-methyl-5'-thioadenosine-binding positions include E119 and 151-152 (DG). D169 serves as the catalytic Proton acceptor. Residue P176 participates in S-methyl-5'-thioadenosine binding.

This sequence belongs to the spermidine/spermine synthase family. Homodimer or homotetramer.

It is found in the cytoplasm. The enzyme catalyses S-adenosyl 3-(methylsulfanyl)propylamine + putrescine = S-methyl-5'-thioadenosine + spermidine + H(+). It participates in amine and polyamine biosynthesis; spermidine biosynthesis; spermidine from putrescine: step 1/1. In terms of biological role, catalyzes the irreversible transfer of a propylamine group from the amino donor S-adenosylmethioninamine (decarboxy-AdoMet) to putrescine (1,4-diaminobutane) to yield spermidine. This is Polyamine aminopropyltransferase from Nitrosomonas europaea (strain ATCC 19718 / CIP 103999 / KCTC 2705 / NBRC 14298).